Consider the following 316-residue polypeptide: uncharacterized protein (316 aa).

T126 lines the substrate pocket. Y149 acts as the Proton acceptor in catalysis.

The protein belongs to the NAD(P)-dependent epimerase/dehydratase family.

This is an uncharacterized protein from Bacillus subtilis (strain 168).